The primary structure comprises 651 residues: ATP-binding cassette sub-family G member 5 (651 aa).

The segment at 1–32 (MGDLSSLTPGGSMGLQVNRGSQSSLEGAPATA) is disordered. The Cytoplasmic segment spans residues 1 to 383 (MGDLSSLTPG…RVTRNLVRNK (383 aa)). The ABC transporter domain maps to 52–293 (RPWWDITSCR…FNDCGYPCPE (242 aa)). 86 to 93 (GSSGSGKT) is an ATP binding site. Residues 384 to 404 (LAVITRLLQNLIMGLFLLFFV) traverse the membrane as a helical segment. An ABC transmembrane type-2 domain is found at 388 to 645 (TRLLQNLIMG…ILGIVVFKIR (258 aa)). Residues 405-421 (LRVRSNVLKGAIQDRVG) lie on the Extracellular side of the membrane. Residues 422 to 442 (LLYQFVGATPYTGMLNAVNLF) traverse the membrane as a helical segment. Over 443 to 467 (PVLRAVSDQESQDGLYQKWQMMLAY) the chain is Cytoplasmic. The chain crosses the membrane as a helical span at residues 468 to 489 (ALHVLPFSVVATMIFSSVCYWT). Residues 490 to 500 (LGLHPEVARFG) are Extracellular-facing. The helical transmembrane segment at 501 to 521 (YFSAALLAPHLIGEFLTLVLL) threads the bilayer. The Cytoplasmic segment spans residues 522-528 (GIVQNPN). The chain crosses the membrane as a helical span at residues 529–549 (IVNSVVALLSIAGVLVGSGFL). At 550-623 (RNIQEMPIPF…PGATSRFTMN (74 aa)) the chain is on the extracellular side. 2 N-linked (GlcNAc...) asparagine glycosylation sites follow: Asn584 and Asn591. A helical membrane pass occupies residues 624–644 (FLILYSFIPALVILGIVVFKI). Topologically, residues 645-651 (RDHLISR) are cytoplasmic.

It belongs to the ABC transporter superfamily. ABCG family. Eye pigment precursor importer (TC 3.A.1.204) subfamily. Heterodimer with ABCG8. Requires Mg(2+) as cofactor. Post-translationally, N-glycosylated. In terms of tissue distribution, strongly expressed in the liver, lower levels in the small intestine and colon.

The protein localises to the cell membrane. It localises to the apical cell membrane. The enzyme catalyses cholesterol(in) + ATP + H2O = cholesterol(out) + ADP + phosphate + H(+). It carries out the reaction sitosterol(in) + ATP + H2O = sitosterol(out) + ADP + phosphate + H(+). Its activity is regulated as follows. The ATPase activity of the heterodimer is stimulated by cholate. Taurocholate, glycocholate, taurochenodeoxycholate, glycochenodeoxycholate and taurodeoxycholate also stimulate ATPase activity, but to a lower degree. Glycodeoxycholate has no significant effect on ATPase activity. ATPase activity is inhibited by vanadate and by berillium fluoride. Functionally, ABCG5 and ABCG8 form an obligate heterodimer that mediates Mg(2+)- and ATP-dependent sterol transport across the cell membrane. Plays an essential role in the selective transport of dietary plant sterols and cholesterol in and out of the enterocytes and in the selective sterol excretion by the liver into bile. Required for normal sterol homeostasis. The heterodimer with ABCG8 has ATPase activity. In Homo sapiens (Human), this protein is ATP-binding cassette sub-family G member 5.